Consider the following 121-residue polypeptide: Large ribosomal subunit protein bL19 (121 aa).

Belongs to the bacterial ribosomal protein bL19 family.

In terms of biological role, this protein is located at the 30S-50S ribosomal subunit interface and may play a role in the structure and function of the aminoacyl-tRNA binding site. This chain is Large ribosomal subunit protein bL19, found in Mesomycoplasma hyopneumoniae (strain 232) (Mycoplasma hyopneumoniae).